The primary structure comprises 191 residues: RNA pyrophosphohydrolase (191 aa).

One can recognise a Nudix hydrolase domain in the interval 6 to 149; the sequence is GYRLNVGIIL…KREVYRQALS (144 aa). Positions 38-59 match the Nudix box motif; it reads GGIKVDEDPDAAMFRELYEEVG. The segment at 162–191 is disordered; that stretch reads GAQAVSDAGGTATRQIPVATEPSGPSSSQR.

The protein belongs to the Nudix hydrolase family. RppH subfamily. A divalent metal cation serves as cofactor.

Its function is as follows. Accelerates the degradation of transcripts by removing pyrophosphate from the 5'-end of triphosphorylated RNA, leading to a more labile monophosphorylated state that can stimulate subsequent ribonuclease cleavage. The chain is RNA pyrophosphohydrolase from Methylococcus capsulatus (strain ATCC 33009 / NCIMB 11132 / Bath).